The primary structure comprises 604 residues: Testis-expressed protein 13C-1 (604 aa).

Disordered stretches follow at residues 314–337 (EGEG…SHKD), 374–397 (PVMP…RPKI), 485–523 (CLNA…HPRK), and 538–580 (ATKQ…SANC). Residues 322 to 333 (QGTSLHGDSSNN) show a composition bias toward polar residues. A compositionally biased stretch (basic and acidic residues) spans 544 to 572 (KQPEGIKSLESKQPQETKSSESKQQEKPL).

It belongs to the TEX13 family.

Functionally, plays a role in transcriptional repression. This Mus musculus (Mouse) protein is Testis-expressed protein 13C-1.